Reading from the N-terminus, the 233-residue chain is Probable fimbrial chaperone protein ElfD (233 aa).

The N-terminal stretch at 1–26 (MKTCITKGIVTVSLTAILLSCSSTWA) is a signal peptide.

This sequence belongs to the periplasmic pilus chaperone family.

It localises to the periplasm. Its function is as follows. Part of the elfADCG fimbrial operon, which could be required for adherence to host epithelial cells. Could be required for the biogenesis of the ElfA fimbriae. The chain is Probable fimbrial chaperone protein ElfD (elfD) from Escherichia coli O157:H7.